The primary structure comprises 85 residues: Splicing factor 3B subunit 5 (85 aa).

The protein belongs to the SF3B5 family. In terms of assembly, component of the SF3B complex. SF3B complex associates with the splicing factor SF3A complex and a 12S RNA unit to form the U2 small nuclear ribonucleoproteins complex (U2 snRNP). Identified in the SAGA transcription regulatory histone acetylation (HAT) complex; the interaction is RNA-independent.

The protein resides in the nucleus. In terms of biological role, involved in pre-mRNA splicing as component of spliceosome. As part of the spliceosome complex, plays a role in the regulation of spermatogonial differentiation. When associated with the SAGA transcription regulatory histone acetylation (HAT) complex, might be involved in the transcriptional activation of a subset of SAGA-regulated genes. This chain is Splicing factor 3B subunit 5, found in Drosophila melanogaster (Fruit fly).